The following is a 431-amino-acid chain: Glutamate-1-semialdehyde 2,1-aminomutase 1 (431 aa).

Lysine 268 bears the N6-(pyridoxal phosphate)lysine mark.

This sequence belongs to the class-III pyridoxal-phosphate-dependent aminotransferase family. HemL subfamily. In terms of assembly, homodimer. Pyridoxal 5'-phosphate serves as cofactor.

The protein localises to the cytoplasm. It catalyses the reaction (S)-4-amino-5-oxopentanoate = 5-aminolevulinate. It participates in porphyrin-containing compound metabolism; protoporphyrin-IX biosynthesis; 5-aminolevulinate from L-glutamyl-tRNA(Glu): step 2/2. The chain is Glutamate-1-semialdehyde 2,1-aminomutase 1 from Anoxybacillus flavithermus (strain DSM 21510 / WK1).